The chain runs to 242 residues: Interleukin-34 (242 aa).

Positions 1–20 (MPRGFTWLRYLGIFLGVALG) are cleaved as a signal peptide. Residue N76 is glycosylated (N-linked (GlcNAc...) asparagine). A disordered region spans residues 210-242 (TQLYPPPPWSPSSPPHSTGSVRPVRAQGEGLLP). The segment covering 213-223 (YPPPPWSPSSP) has biased composition (pro residues).

The protein belongs to the IL-34 family. As to quaternary structure, homodimer. Interacts with CSF1R. As to expression, detected in the sinusoidal epithelium in the red pulp of spleen (at protein level). Predominantly expressed in spleen. Also detected in a range of other tissues including heart, brain, lung, liver, kidney, thymus, testis, ovary, small intestine, prostate and colon.

The protein localises to the secreted. In terms of biological role, cytokine that promotes the proliferation, survival and differentiation of monocytes and macrophages. Promotes the release of pro-inflammatory chemokines, and thereby plays an important role in innate immunity and in inflammatory processes. Plays an important role in the regulation of osteoclast proliferation and differentiation, and in the regulation of bone resorption. Signaling via CSF1R and its downstream effectors stimulates phosphorylation of MAPK1/ERK2 AND MAPK3/ERK1. The sequence is that of Interleukin-34 (IL34) from Homo sapiens (Human).